An 804-amino-acid chain; its full sequence is MAIDSYCIPNFSQTIDNRTIVNIFQSCKYRSQLSVCFLNDKSAADKFSNSMRQGSGTITFIIHAEDGEISEQLHSTFRSVSTMLLCGMQLFVFIVAPRNVISSETGKAITWAFRGSFIELRDHGRGEQALHDILEQFYRLSPLVNVPKMGMAYYGPTSFAELLSLSSKNKTSWRYVIDYSMFTRSALVGFASHMMDECSFANKQINVIGYNPPYVWAGLRHGVTTRFTEMSTPDPEGYGPIKLILPRLTGNVLLKKVKYVQHDPQKKLLCDDSVMFALSRNILYIGVYPATHLLDYNLKGWRMVAVDPKINAAWAETLKQRTSIDLVPISAKFEFNAQSTRDIVLKYFSGVPFSIIDDSWVEGTEDYEKFQELKQSYFEQLVMNGSTSKLRVSMISMKWNRTKDVKCRRLLALLPQPYGGSLRELRAYFHVNGAAEVNIKKSEVNSYMDKFTSLSISEQIGSQKFMHMLITNYGDALKLKTGRDKAIIASYSLSNAINKKERVLKFLSDAAKSETLIIFGAPNLNRVKFMIKSGIVLGSDVTISNDLITFKNASGKVWKDYGYTQSELIKSSMIEITIEQMLCISSSSYNGVGYFANSIYNDMFSWYVPEWLFEKYFSIQDIRLSPVALVKCFTTSIRNLCYVPHLTYYALRGSFVEKVLITNNVLNSSYLITGTSHSTFKVLSNFEVPSPAGVLKFKAGDDVNISGHLLSLVIAAHFVASPTLLWATHMKRMTTPVNLPKNLDKLLFFDNKIKNGMLEKWHSREEVVLAAMIVENYVAHILNGRHSIEIIQEITQVIYEKFNA.

The protein belongs to the phytoreovirus protein P5 family.

It localises to the virion. It is found in the host cytoplasm. The catalysed reaction is a 5'-end diphospho-ribonucleoside in mRNA + GTP + H(+) = a 5'-end (5'-triphosphoguanosine)-ribonucleoside in mRNA + diphosphate. It participates in mRNA processing; mRNA capping. Its function is as follows. Enzyme involved in mRNA capping (Potential). Binds to GTP and might have guanylyltransferase activity. Together with the RNA-directed RNA polymerase P1 and protein P7, forms an transcriptional complex positioned near the channels situated at each of the five-fold vertices of the core. The chain is Putative mRNA-capping enzyme P5 from Catharanthus roseus (Madagascar periwinkle).